A 52-amino-acid chain; its full sequence is Large ribosomal subunit protein bL32c (52 aa).

The protein belongs to the bacterial ribosomal protein bL32 family.

Its subcellular location is the plastid. It localises to the chloroplast. The polypeptide is Large ribosomal subunit protein bL32c (Capsella bursa-pastoris (Shepherd's purse)).